The chain runs to 44 residues: Photosystem I reaction center subunit IX (44 aa).

The chain crosses the membrane as a helical span at residues 7–27 (YLSVAPVLSTLWFASLAGLLI).

It belongs to the PsaJ family.

The protein resides in the plastid. The protein localises to the chloroplast thylakoid membrane. Functionally, may help in the organization of the PsaE and PsaF subunits. This is Photosystem I reaction center subunit IX from Barbarea verna (Land cress).